The sequence spans 304 residues: Cytochrome c biogenesis protein CcsA (304 aa).

8 consecutive transmembrane segments (helical) span residues 11 to 31 (SLGF…FWAV), 37 to 57 (AGLV…QLIL), 63 to 83 (GHFP…ACTL), 96 to 116 (IVAA…SFAL), 141 to 161 (VIMV…AVLV), 212 to 232 (TITV…VWAN), 246 to 263 (TWAL…HTRL), and 275 to 295 (VAVV…LLGI).

It belongs to the CcmF/CycK/Ccl1/NrfE/CcsA family. May interact with ccs1.

It is found in the cellular thylakoid membrane. Required during biogenesis of c-type cytochromes (cytochrome c6 and cytochrome f) at the step of heme attachment. This chain is Cytochrome c biogenesis protein CcsA, found in Synechococcus sp. (strain CC9605).